Consider the following 449-residue polypeptide: Flavonol 7-O-beta-glucosyltransferase UGT74F1 (449 aa).

Residue histidine 18 is the Proton acceptor of the active site. Histidine 18 is a binding site for an anthocyanidin. Catalysis depends on aspartate 111, which acts as the Charge relay. 9 residues coordinate UDP-alpha-D-glucose: threonine 133, glutamine 327, histidine 342, tryptophan 345, asparagine 346, serine 347, glutamate 350, aspartate 366, and glutamine 367.

The protein belongs to the UDP-glycosyltransferase family.

The enzyme catalyses a 7-O-hydroxy-flavonol + UDP-alpha-D-glucose = a flavonol 7-O-beta-D-glucoside + UDP + H(+). In terms of biological role, possesses quercetin 7-O-glucosyltransferase and 4'-O-glucosyltransferase activities in vitro. Also active in vitro on benzoates and benzoate derivatives. Has low affinity for the tryptophan precursor anthranilate. Catalyzes the formation of anthranilate glucose ester. Is a minor source of this activity in the plant. The protein is Flavonol 7-O-beta-glucosyltransferase UGT74F1 of Arabidopsis thaliana (Mouse-ear cress).